Here is a 225-residue protein sequence, read N- to C-terminus: MTTAAIIVAAGRGTRAGGDLPKQWQPLAGRPVLAHTLAAFRAAAGVSRTLLVIHPDDRARAEALPGVAEGKVELVEGGASRDASVRNALEALAGAGIERVLIHDGARPLVAPELIARTLAALETAPGAAPAVPVSDALWRGEGGRVVGTQDRTGLFRAQTPQAFRYEAILAAHRAHPGGAADDVEVARAAGLEVAIVEGCEDNLKVTYPGDFARAERLLALAAGL.

It belongs to the IspD/TarI cytidylyltransferase family. IspD subfamily.

It carries out the reaction 2-C-methyl-D-erythritol 4-phosphate + CTP + H(+) = 4-CDP-2-C-methyl-D-erythritol + diphosphate. Its pathway is isoprenoid biosynthesis; isopentenyl diphosphate biosynthesis via DXP pathway; isopentenyl diphosphate from 1-deoxy-D-xylulose 5-phosphate: step 2/6. In terms of biological role, catalyzes the formation of 4-diphosphocytidyl-2-C-methyl-D-erythritol from CTP and 2-C-methyl-D-erythritol 4-phosphate (MEP). The sequence is that of 2-C-methyl-D-erythritol 4-phosphate cytidylyltransferase from Cereibacter sphaeroides (strain ATCC 17023 / DSM 158 / JCM 6121 / CCUG 31486 / LMG 2827 / NBRC 12203 / NCIMB 8253 / ATH 2.4.1.) (Rhodobacter sphaeroides).